Here is a 521-residue protein sequence, read N- to C-terminus: Importin subunit alpha-4 (521 aa).

Residues 1-29 (MAENPSLENHRIKSFKNKGRDVETMRRHR) form a disordered region. At A2 the chain carries N-acetylalanine. Positions 2–58 (AENPSLENHRIKSFKNKGRDVETMRRHRNEVTVELRKNKRDEHLLKKRNVPQEESLE) constitute an IBB domain. Residues 18-29 (KGRDVETMRRHR) are compositionally biased toward basic and acidic residues. Positions 43 to 52 (EHLLKKRNVP) match the Nuclear localization signal motif. Phosphoserine is present on residues S56 and S60. One copy of the ARM 1; truncated repeat lies at 66–106 (FKAQNVTLEAILQNATSDNPVVQLSAVQAARKLLSSDRNPP). 8 ARM repeats span residues 107–149 (IDDL…TSAQ), 150–194 (TQAV…CRDY), 195–233 (VISLGVVKPLLSFISPSIPITFLRNVTWVIVNLCRNKDP), 234–278 (PPPM…EQIQ), 279–318 (MVIDSGVVPFLVPLLSHQEVKVQTAALRAVGNIVTGTDEQ), 319–360 (TQVV…NQQQ), 361–400 (VQAVIDAGLIPMIIHQLAKGDFGTQKEAAWAISNLTISGR), and 401–443 (KDQV…IMAG). The NLS binding site (major) stretch occupies residues 137–229 (WALTNIASGT…VTWVIVNLCR (93 aa)). The NLS binding site (minor) stretch occupies residues 306 to 394 (RAVGNIVTGT…QKEAAWAISN (89 aa)). An ARM 10; atypical repeat occupies 447–485 (STIAEIIEECGGLEKIEVLQQHENEDIYKLAFEIIDQYF). Residue Y484 is modified to Phosphotyrosine.

The protein belongs to the importin alpha family. As to quaternary structure, forms a complex with importin subunit beta-1. Interacts with DDX21. Interacts with NCBP1, NCBP2/CBP20 and NCBP3. Interacts with RCC1. Interacts with ZC3H11A. In terms of assembly, (Microbial infection) Interacts with HIV-1 integrase; this interaction might play a role in nuclear import of HIV pre-integration complex. (Microbial infection) Interacts with influenza virus nucleoprotein; this interaction might play a role in nuclear import of viral genome. As to expression, ubiquitous. Highest levels in heart and skeletal muscle.

It is found in the cytoplasm. The protein localises to the nucleus. Its function is as follows. Functions in nuclear protein import as an adapter protein for nuclear receptor KPNB1. Binds specifically and directly to substrates containing either a simple or bipartite NLS motif. Docking of the importin/substrate complex to the nuclear pore complex (NPC) is mediated by KPNB1 through binding to nucleoporin FxFG repeats and the complex is subsequently translocated through the pore by an energy requiring, Ran-dependent mechanism. At the nucleoplasmic side of the NPC, Ran binds to importin-beta and the three components separate and importin-alpha and -beta are re-exported from the nucleus to the cytoplasm where GTP hydrolysis releases Ran from importin. The directionality of nuclear import is thought to be conferred by an asymmetric distribution of the GTP- and GDP-bound forms of Ran between the cytoplasm and nucleus. In vitro, mediates the nuclear import of human cytomegalovirus UL84 by recognizing a non-classical NLS. Recognizes NLSs of influenza A virus nucleoprotein probably through ARM repeats 7-9. This is Importin subunit alpha-4 (KPNA3) from Homo sapiens (Human).